The sequence spans 246 residues: tRNA (guanine-N(1)-)-methyltransferase (246 aa).

Residues Gly-113 and 133 to 138 each bind S-adenosyl-L-methionine; that span reads IGDYVL.

The protein belongs to the RNA methyltransferase TrmD family. As to quaternary structure, homodimer.

It localises to the cytoplasm. It carries out the reaction guanosine(37) in tRNA + S-adenosyl-L-methionine = N(1)-methylguanosine(37) in tRNA + S-adenosyl-L-homocysteine + H(+). Specifically methylates guanosine-37 in various tRNAs. The protein is tRNA (guanine-N(1)-)-methyltransferase of Haemophilus influenzae (strain PittGG).